A 240-amino-acid polypeptide reads, in one-letter code: Lysoplasmalogenase TMEM86A (240 aa).

Residues 1-21 lie on the Cytoplasmic side of the membrane; it reads MVSPVTVVKSEGPKLVPFFKA. The chain crosses the membrane as a helical span at residues 22–42; that stretch reads TCVYFVLWLPSSSPSWVSTLI. A topological domain (extracellular) is located at residue Lys43. Residues 44-64 traverse the membrane as a helical segment; it reads CLPIFCLWLFLLAHGLGFLLA. The Cytoplasmic segment spans residues 65-70; sequence HPSATR. Residues 71–91 form a helical membrane-spanning segment; it reads IFVGLVFSAVGDAFLIWQDQG. Position 92 (Tyr92) is a topological domain, extracellular. The chain crosses the membrane as a helical span at residues 93 to 113; that stretch reads FVHGLLMFAVTHMFYASAFGM. The Cytoplasmic portion of the chain corresponds to 114–115; the sequence is QP. A helical membrane pass occupies residues 116–136; that stretch reads LALRTGLVMAALSGLCYALLY. Residues 137-138 lie on the Extracellular side of the membrane; sequence PC. The helical transmembrane segment at 139-159 threads the bilayer; that stretch reads LSGAFTYLVGVYVALIGFMGW. Residues 160 to 174 are Cytoplasmic-facing; that stretch reads RAMAGLRLAGADWRW. Residues 175–195 traverse the membrane as a helical segment; it reads TELAAGSGALFFIISDLTIAL. Residues 196–206 lie on the Extracellular side of the membrane; that stretch reads NKFCFPVPYSR. A helical membrane pass occupies residues 207 to 227; that stretch reads ALIMSTYYVAQMLVALSAVES. Residues 228–240 lie on the Cytoplasmic side of the membrane; that stretch reads REPVEHYRLTKAN.

Belongs to the TMEM86 family. Expressed in the macrophages.

It is found in the endoplasmic reticulum membrane. It catalyses the reaction a 1-O-(1Z-alkenyl)-sn-glycero-3-phosphocholine + H2O = a 2,3-saturated aldehyde + sn-glycerol 3-phosphocholine. The enzyme catalyses a 1-O-(1Z-alkenyl)-sn-glycero-3-phosphoethanolamine + H2O = a 2,3-saturated aldehyde + sn-glycero-3-phosphoethanolamine. In terms of biological role, catalyzes the hydrolysis of the vinyl ether bond of choline or ethanolamine lysoplasmalogens, forming fatty aldehyde and glycerophosphocholine or glycerophosphoethanolamine, respectively and is specific for the sn-2-deacylated (lyso) form of plasmalogen. Plays an important role in lysoplasmalogen metabolism in the adipocyte tissue and macrophages. This Homo sapiens (Human) protein is Lysoplasmalogenase TMEM86A (TMEM86A).